Here is a 472-residue protein sequence, read N- to C-terminus: MFRGAWMWPGKDAAALTICCCCCCWAPRPSDKPCADSERAQRWRLSLASLLFFTVLLADHLWLCAGARPRARELSSAMRPPWGAGRERQPVPPRAVLPLPPPPPGEPSAPPGTCGPRYSNLTKAAPAAGSRPVCGGVPEPTGLDAACTKLQSLQRLFEPTTPAPPLRPPDSLSRAPAEFPSAKKNLLKGHFRNFTLSFCDTYTVWDLLLGMDRPDSLDCSLDTLMGDLLAVVASPGSGAWEACSNCIEAYQRLDRHAQEKYDEFDLVLHKYLQAEEYSIRSCTKGCKAVYKAWLCSEYFSVTQQECQRWVPCKQYCLEVQTRCPFILPDNEEMVYGGLPGFICTGLLDTSPKRLETKCCDVQWVSCEAKKKKFKESEAPKTHQQQFHHSYFHHYHQQYHHYHPHHDPPGRVSNKPALLPVSGGSRLSPSRIRLCVLVLMLLHTVVSFSSNQGGGGLGLETLPALEEGLTREE.

Residues 47 to 67 (LASLLFFTVLLADHLWLCAGA) traverse the membrane as a helical segment. Positions 77-114 (AMRPPWGAGRERQPVPPRAVLPLPPPPPGEPSAPPGTC) are disordered. Pro residues predominate over residues 90 to 110 (PVPPRAVLPLPPPPPGEPSAP). Asn-120 and Asn-193 each carry an N-linked (GlcNAc...) asparagine glycan. A helical membrane pass occupies residues 433 to 453 (LCVLVLMLLHTVVSFSSNQGG).

Belongs to the NALF family.

It is found in the membrane. In terms of biological role, probable component of the NALCN channel complex, a channel that regulates the resting membrane potential and controls neuronal excitability. This is NALCN channel auxiliary factor 2 from Homo sapiens (Human).